The primary structure comprises 320 residues: ATP-dependent 6-phosphofructokinase (320 aa).

Residue G12 coordinates ATP. Residues R22 to R26 and R55 to D60 contribute to the ADP site. Residues R73–F74 and G103–S106 contribute to the ATP site. D104 is a Mg(2+) binding site. Position 126–128 (T126–D128) interacts with substrate. D128 functions as the Proton acceptor in the catalytic mechanism. Position 155 (R155) interacts with ADP. Residues R163 and M170–R172 each bind substrate. Residues G186 to E188, K212, and K214 to H216 each bind ADP. Substrate-binding positions include E223, R244, and H250 to R253.

Belongs to the phosphofructokinase type A (PFKA) family. ATP-dependent PFK group I subfamily. Prokaryotic clade 'B1' sub-subfamily. In terms of assembly, homotetramer. The cofactor is Mg(2+).

Its subcellular location is the cytoplasm. The enzyme catalyses beta-D-fructose 6-phosphate + ATP = beta-D-fructose 1,6-bisphosphate + ADP + H(+). The protein operates within carbohydrate degradation; glycolysis; D-glyceraldehyde 3-phosphate and glycerone phosphate from D-glucose: step 3/4. Its activity is regulated as follows. Allosterically activated by ADP and other diphosphonucleosides, and allosterically inhibited by phosphoenolpyruvate. Catalyzes the phosphorylation of D-fructose 6-phosphate to fructose 1,6-bisphosphate by ATP, the first committing step of glycolysis. This is ATP-dependent 6-phosphofructokinase from Klebsiella pneumoniae (strain 342).